The chain runs to 37 residues: Large ribosomal subunit protein bL36 (37 aa).

This sequence belongs to the bacterial ribosomal protein bL36 family.

The polypeptide is Large ribosomal subunit protein bL36 (Prochlorococcus marinus (strain MIT 9313)).